Reading from the N-terminus, the 342-residue chain is Heparan sulfate glucosamine 3-O-sulfotransferase 6 (342 aa).

A disordered region spans residues 1–21 (MAGSGGLGGGAGGGQGAGAGQ). Residues 1-31 (MAGSGGLGGGAGGGQGAGAGQGAALRASRAP) are Cytoplasmic-facing. Residues 32–49 (MLLVALVLGAYCLCALPG) form a helical; Signal-anchor for type II membrane protein membrane-spanning segment. The Lumenal portion of the chain corresponds to 50-342 (RCPPAARAPA…QMTGQDFGWG (293 aa)). The segment at 55–85 (ARAPAPAPAPSEPSSSVHRPGAPGLPLASGP) is disordered. A compositionally biased stretch (low complexity) spans 66 to 85 (EPSSSVHRPGAPGLPLASGP). 100–104 (KGGTR) serves as a coordination point for 3'-phosphoadenylyl sulfate. Substrate contacts are provided by residues 122 to 128 (EPHFFDR) and 153 to 156 (KTPS). Residues Arg-181 and Ser-189 each contribute to the 3'-phosphoadenylyl sulfate site. 220–221 (WS) is a binding site for substrate. Asn-281 carries an N-linked (GlcNAc...) asparagine glycan. The cysteines at positions 288 and 300 are disulfide-linked. Position 305–309 (305–309 (KGRPH)) interacts with 3'-phosphoadenylyl sulfate.

This sequence belongs to the sulfotransferase 1 family.

The protein localises to the golgi apparatus membrane. It carries out the reaction alpha-D-glucosaminyl-[heparan sulfate](n) + 3'-phosphoadenylyl sulfate = 3-sulfo-alpha-D-glucosaminyl-[heparan sulfate](n) + adenosine 3',5'-bisphosphate + H(+). Functionally, sulfotransferase that utilizes 3'-phospho-5'-adenylyl sulfate (PAPS) to catalyze the transfer of a sulfo group to heparan sulfate. The substrate-specific O-sulfation generates an enzyme-modified heparan sulfate which acts as a binding receptor to Herpes Simplex Virus-1 (HSV-1) and permits its entry. Unlike 3-OST-1, does not convert non-anticoagulant heparan sulfate to anticoagulant heparan sulfate. The chain is Heparan sulfate glucosamine 3-O-sulfotransferase 6 (HS3ST6) from Homo sapiens (Human).